The chain runs to 299 residues: Regucalcin (299 aa).

E18 serves as a coordination point for a divalent metal cation. The substrate site is built by R101, N103, and E121. 2 residues coordinate a divalent metal cation: N154 and D204. D204 serves as the catalytic Proton donor/acceptor. Residues K244 and K253 each carry the N6-succinyllysine modification.

This sequence belongs to the SMP-30/CGR1 family. In terms of assembly, monomer. It depends on Zn(2+) as a cofactor. Mn(2+) serves as cofactor. The cofactor is Ca(2+). Mg(2+) is required as a cofactor.

It localises to the cytoplasm. The catalysed reaction is D-glucono-1,5-lactone + H2O = D-gluconate + H(+). Its pathway is cofactor biosynthesis; L-ascorbate biosynthesis via UDP-alpha-D-glucuronate pathway; L-ascorbate from UDP-alpha-D-glucuronate: step 3/4. Functionally, gluconolactonase with low activity towards other sugar lactones, including gulonolactone and galactonolactone. Catalyzes a key step in ascorbic acid (vitamin C) biosynthesis. Can also hydrolyze diisopropyl phosphorofluoridate and phenylacetate (in vitro). Calcium-binding protein. Modulates Ca(2+) signaling, and Ca(2+)-dependent cellular processes and enzyme activities. The polypeptide is Regucalcin (RGN) (Bos taurus (Bovine)).